The chain runs to 153 residues: Actin-related protein 2/3 complex subunit 5-like protein (153 aa).

Serine 64 carries the post-translational modification Phosphoserine.

Belongs to the ARPC5 family. May be a component of the Arp2/3 complex in which it may replace ARPC5.

The protein localises to the cytoplasm. It is found in the cytoskeleton. Its function is as follows. May function as component of the Arp2/3 complex which is involved in regulation of actin polymerization and together with an activating nucleation-promoting factor (NPF) mediates the formation of branched actin networks. This is Actin-related protein 2/3 complex subunit 5-like protein (Arpc5l) from Mus musculus (Mouse).